Reading from the N-terminus, the 339-residue chain is Quinolinate synthase (339 aa).

Residues His63 and Ser81 each contribute to the iminosuccinate site. Position 126 (Cys126) interacts with [4Fe-4S] cluster. Iminosuccinate-binding positions include 152 to 154 (YVN) and Ser169. Cys211 is a [4Fe-4S] cluster binding site. Residues 237 to 239 (HPE) and Thr254 contribute to the iminosuccinate site. Cys297 serves as a coordination point for [4Fe-4S] cluster.

The protein belongs to the quinolinate synthase family. Type 2 subfamily. [4Fe-4S] cluster is required as a cofactor.

Its subcellular location is the cytoplasm. The enzyme catalyses iminosuccinate + dihydroxyacetone phosphate = quinolinate + phosphate + 2 H2O + H(+). The protein operates within cofactor biosynthesis; NAD(+) biosynthesis; quinolinate from iminoaspartate: step 1/1. Its function is as follows. Catalyzes the condensation of iminoaspartate with dihydroxyacetone phosphate to form quinolinate. The polypeptide is Quinolinate synthase (Xylella fastidiosa (strain Temecula1 / ATCC 700964)).